Consider the following 525-residue polypeptide: Transmembrane protein 184C (525 aa).

7 consecutive transmembrane segments (helical) span residues 17 to 37 (LLVL…IWKF), 48 to 68 (SWFI…WGIL), 83 to 103 (IIRI…ALVY), 121 to 141 (VIYN…PNLI), 212 to 232 (YLVI…LLFY), 254 to 274 (VVFV…LGVI), and 287 to 307 (AVAT…AAIA). Disordered stretches follow at residues 358–394 (PKKK…PSPG) and 483–525 (LFPS…STDP). The span at 373–388 (SSLLSSSSQDLTSGSS) shows a compositional bias: low complexity. The span at 483-502 (LFPSTETSENSMIDTSESQQ) shows a compositional bias: polar residues. Positions 503–525 (ESSDLCTESSDSSTESSDLSTDP) are enriched in low complexity.

The protein belongs to the TMEM184 family.

Its subcellular location is the membrane. In terms of biological role, possible tumor suppressor which may play a role in cell growth. This chain is Transmembrane protein 184C (Tmem184c), found in Mus musculus (Mouse).